The primary structure comprises 186 residues: ATP synthase subunit b (186 aa).

Residues 28 to 48 (IVWSIIPFAVILFVFWKFVLP) traverse the membrane as a helical segment.

Belongs to the ATPase B chain family. In terms of assembly, F-type ATPases have 2 components, F(1) - the catalytic core - and F(0) - the membrane proton channel. F(1) has five subunits: alpha(3), beta(3), gamma(1), delta(1), epsilon(1). F(0) has three main subunits: a(1), b(2) and c(10-14). The alpha and beta chains form an alternating ring which encloses part of the gamma chain. F(1) is attached to F(0) by a central stalk formed by the gamma and epsilon chains, while a peripheral stalk is formed by the delta and b chains.

The protein localises to the cell membrane. Functionally, f(1)F(0) ATP synthase produces ATP from ADP in the presence of a proton or sodium gradient. F-type ATPases consist of two structural domains, F(1) containing the extramembraneous catalytic core and F(0) containing the membrane proton channel, linked together by a central stalk and a peripheral stalk. During catalysis, ATP synthesis in the catalytic domain of F(1) is coupled via a rotary mechanism of the central stalk subunits to proton translocation. Its function is as follows. Component of the F(0) channel, it forms part of the peripheral stalk, linking F(1) to F(0). In Corynebacterium jeikeium (strain K411), this protein is ATP synthase subunit b.